The sequence spans 113 residues: Prostate and testis expressed protein 2 (113 aa).

A signal peptide spans 1 to 26 (MLVLFLLGTVFLLCPYWGELHDPIKA). A UPAR/Ly6 domain is found at 29–110 (IMCYECKKYH…CDHSNYCNLP (82 aa)). 4 cysteine pairs are disulfide-bonded: Cys31/Cys57, Cys34/Cys42, Cys49/Cys80, and Cys84/Cys101.

It belongs to the PATE family. Isoform 1 and isoform 2 are expressed in prostate and testis. Isoform 2 is expressed in male and female brain at equivalent levels, in particular in cerebellum, cerebral cortex, corpus callosum, occipital, parrietal and temporal lobes, and pons, but not in amygdala, cerebral peduncle, hippocampus and thalamus.

Its subcellular location is the secreted. This is Prostate and testis expressed protein 2 (PATE2) from Homo sapiens (Human).